The sequence spans 386 residues: Delta(7)-sterol 5(6)-desaturase (386 aa).

3 consecutive transmembrane segments (helical) span residues 119-139, 172-192, and 206-226; these read VLSL…IVAY, IPVM…GYSF, and AILW…YFLH. The region spanning 214–337 is the Fatty acid hydroxylase domain; it reads FILFTDCGIY…FTTLWDRLGN (124 aa). The Histidine box-1 signature appears at 226 to 230; that stretch reads HRWLH. The Histidine box-2 signature appears at 239–243; it reads HKPHH. A helical membrane pass occupies residues 272–292; sequence PLLFPLHKVLYLLLFTFVNFW. Positions 314-318 match the Histidine box-3 motif; it reads HTVHH.

The protein belongs to the sterol desaturase family. Requires Fe cation as cofactor.

The protein localises to the endoplasmic reticulum membrane. It catalyses the reaction a Delta(7)-sterol + 2 Fe(II)-[cytochrome b5] + O2 + 2 H(+) = a Delta(5),Delta(7)-sterol + 2 Fe(III)-[cytochrome b5] + 2 H2O. It participates in steroid metabolism; ergosterol biosynthesis; ergosterol from zymosterol: step 3/5. Functionally, catalyzes the introduction of a C-5 double bond in the B ring of ergosterol. May contribute to the regulation of ergosterol biosynthesis. The polypeptide is Delta(7)-sterol 5(6)-desaturase (ERG3) (Candida dubliniensis (strain CD36 / ATCC MYA-646 / CBS 7987 / NCPF 3949 / NRRL Y-17841) (Yeast)).